The primary structure comprises 591 residues: DDB1- and CUL4-associated factor 8 (591 aa).

Basic and acidic residues predominate over residues 1-14; that stretch reads MSSKRPSTDGRRDL. Residues 1–140 form a disordered region; sequence MSSKRPSTDG…EDWVSSETTA (140 aa). Phosphoserine is present on residues Ser21 and Ser22. The Nuclear export signal signature appears at 39 to 50; that stretch reads IEVEASDLSLSL. 2 stretches are compositionally biased toward basic and acidic residues: residues 65 to 99 and 118 to 131; these read RGTD…HGHS and SRDQ…RALE. Phosphoserine is present on residues Ser99, Ser123, and Ser124. WD repeat units lie at residues 185–224, 228–269, 275–315, 323–363, 379–418, 426–466, and 470–509; these read GHTG…PVLD, GHKS…CCKN, QHKG…PASK, EKKV…ENEN, ESKA…GAQY, RNNA…IIQF, and DKGG…STEL. At Arg198 the chain carries Omega-N-methylarginine; by PRMT1. Residues 552–591 form a disordered region; the sequence is HRRWREPGVGATDADSDESPSSSDTSDEEEGPDRVQCMPS.

This sequence belongs to the WD repeat DCAF8 family. Interacts with DDB1, CUL4A and CUL4B. Interacts with KPNA1, KPNB1 and XPO1.

It is found in the nucleus. The protein resides in the cytoplasm. It functions in the pathway protein modification; protein ubiquitination. May function as a substrate receptor for CUL4-DDB1 E3 ubiquitin-protein ligase complex. The chain is DDB1- and CUL4-associated factor 8 (Dcaf8) from Rattus norvegicus (Rat).